The following is a 318-amino-acid chain: Protein W (318 aa).

Disordered regions lie at residues 1–23 (MDQD…GGRE) and 38–318 (SEPT…KKGA). A compositionally biased stretch (basic and acidic residues) spans 7 to 20 (ILKEDSEVEREAPG). The segment covering 50 to 59 (LHNTINTPQG) has biased composition (polar residues). Ser68 is modified (phosphoserine; by host). The span at 83–101 (RSGEESRVSGRTSKPEAEA) shows a compositional bias: basic and acidic residues. A Phosphoserine; by host modification is found at Ser125. Residues 150–168 (GIEDENREMAAHPDKRGED) show a composition bias toward basic and acidic residues. Polar residues predominate over residues 191–206 (ASNNGRSMEPGSSHSA). A phosphoserine; by host mark is found at Ser192, Ser249, Ser257, and Ser260.

This Sendai virus (strain Z) (SeV) protein is Protein W (P/V/C).